The primary structure comprises 204 residues: Translation initiation factor IF-3 (204 aa).

The disordered stretch occupies residues 169–204 (VPKAAPKRDSGRSESAQEAPTARSAEASRPEAPANA).

The protein belongs to the IF-3 family. Monomer.

Its subcellular location is the cytoplasm. In terms of biological role, IF-3 binds to the 30S ribosomal subunit and shifts the equilibrium between 70S ribosomes and their 50S and 30S subunits in favor of the free subunits, thus enhancing the availability of 30S subunits on which protein synthesis initiation begins. In Deinococcus geothermalis (strain DSM 11300 / CIP 105573 / AG-3a), this protein is Translation initiation factor IF-3.